The following is a 422-amino-acid chain: Probable biofilm formation methyltransferase WspC (422 aa).

One can recognise a CheR-type methyltransferase domain in the interval 1 to 264; that stretch reads MNDRFERLLK…LSFVFRRTSE (264 aa). S-adenosyl-L-methionine contacts are provided by residues Thr67, Arg71, Glu108, Asp132, 186-187, and 205-206; these read NL and RN. The disordered stretch occupies residues 289–316; sequence ASIRPSPPPPAKPRQRLSSLVPPASGQP. The stretch at 354–387 is one TPR repeat; sequence ATVFYWLGLLSDVAGQEQEAQDFYRKALYLEPQH.

In terms of assembly, monomer.

Its function is as follows. Involved in biofilm formation. This Pseudomonas aeruginosa (strain ATCC 15692 / DSM 22644 / CIP 104116 / JCM 14847 / LMG 12228 / 1C / PRS 101 / PAO1) protein is Probable biofilm formation methyltransferase WspC (wspC).